A 214-amino-acid chain; its full sequence is LexA repressor (214 aa).

The segment at residues 28–48 (IRDIQRELSISSTSVVAYNLR) is a DNA-binding region (H-T-H motif). Residues S133 and K172 each act as for autocatalytic cleavage activity in the active site.

This sequence belongs to the peptidase S24 family. Homodimer.

It carries out the reaction Hydrolysis of Ala-|-Gly bond in repressor LexA.. Its function is as follows. Represses a number of genes involved in the response to DNA damage (SOS response), including recA and lexA. In the presence of single-stranded DNA, RecA interacts with LexA causing an autocatalytic cleavage which disrupts the DNA-binding part of LexA, leading to derepression of the SOS regulon and eventually DNA repair. This chain is LexA repressor, found in Herpetosiphon aurantiacus (strain ATCC 23779 / DSM 785 / 114-95).